Reading from the N-terminus, the 336-residue chain is Ribosomal RNA large subunit methyltransferase F (336 aa).

It belongs to the methyltransferase superfamily. METTL16/RlmF family.

The protein resides in the cytoplasm. It carries out the reaction adenosine(1618) in 23S rRNA + S-adenosyl-L-methionine = N(6)-methyladenosine(1618) in 23S rRNA + S-adenosyl-L-homocysteine + H(+). Specifically methylates the adenine in position 1618 of 23S rRNA. This is Ribosomal RNA large subunit methyltransferase F from Yersinia pestis bv. Antiqua (strain Nepal516).